The following is a 292-amino-acid chain: Ornithine decarboxylase antizyme (292 aa).

Belongs to the ODC antizyme family. As to quaternary structure, interacts with ODC/SPE1 and thereby sterically blocks ODC homodimerization.

In terms of biological role, ornithine decarboxylase (ODC) antizyme protein that negatively regulates ODC activity and intracellular polyamine biosynthesis in response to increased intracellular polyamine levels. Binds to ODC/SPE1 monomers, inhibiting the assembly of the functional ODC homodimer, and targets the monomers for ubiquitin-independent proteolytic destruction by the 26S proteasome. This Saccharomyces cerevisiae (strain ATCC 204508 / S288c) (Baker's yeast) protein is Ornithine decarboxylase antizyme (OAZ1).